Here is a 307-residue protein sequence, read N- to C-terminus: 4-hydroxy-3-methylbut-2-enyl diphosphate reductase (307 aa).

A [4Fe-4S] cluster-binding site is contributed by C13. (2E)-4-hydroxy-3-methylbut-2-enyl diphosphate contacts are provided by H42 and H75. Residues H42 and H75 each coordinate dimethylallyl diphosphate. Residues H42 and H75 each contribute to the isopentenyl diphosphate site. C97 is a [4Fe-4S] cluster binding site. H125 contacts (2E)-4-hydroxy-3-methylbut-2-enyl diphosphate. Residue H125 coordinates dimethylallyl diphosphate. Residue H125 coordinates isopentenyl diphosphate. Catalysis depends on E127, which acts as the Proton donor. (2E)-4-hydroxy-3-methylbut-2-enyl diphosphate is bound at residue T165. Residue C195 coordinates [4Fe-4S] cluster. The (2E)-4-hydroxy-3-methylbut-2-enyl diphosphate site is built by S223, S224, N225, and S267. Positions 223, 224, 225, and 267 each coordinate dimethylallyl diphosphate. Isopentenyl diphosphate-binding residues include S223, S224, N225, and S267.

The protein belongs to the IspH family. The cofactor is [4Fe-4S] cluster.

The catalysed reaction is isopentenyl diphosphate + 2 oxidized [2Fe-2S]-[ferredoxin] + H2O = (2E)-4-hydroxy-3-methylbut-2-enyl diphosphate + 2 reduced [2Fe-2S]-[ferredoxin] + 2 H(+). It carries out the reaction dimethylallyl diphosphate + 2 oxidized [2Fe-2S]-[ferredoxin] + H2O = (2E)-4-hydroxy-3-methylbut-2-enyl diphosphate + 2 reduced [2Fe-2S]-[ferredoxin] + 2 H(+). It functions in the pathway isoprenoid biosynthesis; dimethylallyl diphosphate biosynthesis; dimethylallyl diphosphate from (2E)-4-hydroxy-3-methylbutenyl diphosphate: step 1/1. The protein operates within isoprenoid biosynthesis; isopentenyl diphosphate biosynthesis via DXP pathway; isopentenyl diphosphate from 1-deoxy-D-xylulose 5-phosphate: step 6/6. Catalyzes the conversion of 1-hydroxy-2-methyl-2-(E)-butenyl 4-diphosphate (HMBPP) into a mixture of isopentenyl diphosphate (IPP) and dimethylallyl diphosphate (DMAPP). Acts in the terminal step of the DOXP/MEP pathway for isoprenoid precursor biosynthesis. This Chlamydia trachomatis serovar D (strain ATCC VR-885 / DSM 19411 / UW-3/Cx) protein is 4-hydroxy-3-methylbut-2-enyl diphosphate reductase.